Here is a 338-residue protein sequence, read N- to C-terminus: Holliday junction branch migration complex subunit RuvB (338 aa).

Residues Ala4–Tyr187 form a large ATPase domain (RuvB-L) region. ATP contacts are provided by residues Arg27, Gly68, Lys71, Thr72, Thr73, Glu134–Tyr136, Arg177, Tyr187, and Arg224. Thr72 is a binding site for Mg(2+). Residues Asn188–Asp258 form a small ATPAse domain (RuvB-S) region. The segment at Ser261 to Lys338 is head domain (RuvB-H). The DNA site is built by Arg297, Arg316, and Arg321.

This sequence belongs to the RuvB family. In terms of assembly, homohexamer. Forms an RuvA(8)-RuvB(12)-Holliday junction (HJ) complex. HJ DNA is sandwiched between 2 RuvA tetramers; dsDNA enters through RuvA and exits via RuvB. An RuvB hexamer assembles on each DNA strand where it exits the tetramer. Each RuvB hexamer is contacted by two RuvA subunits (via domain III) on 2 adjacent RuvB subunits; this complex drives branch migration. In the full resolvosome a probable DNA-RuvA(4)-RuvB(12)-RuvC(2) complex forms which resolves the HJ.

The protein localises to the cytoplasm. The catalysed reaction is ATP + H2O = ADP + phosphate + H(+). The RuvA-RuvB-RuvC complex processes Holliday junction (HJ) DNA during genetic recombination and DNA repair, while the RuvA-RuvB complex plays an important role in the rescue of blocked DNA replication forks via replication fork reversal (RFR). RuvA specifically binds to HJ cruciform DNA, conferring on it an open structure. The RuvB hexamer acts as an ATP-dependent pump, pulling dsDNA into and through the RuvAB complex. RuvB forms 2 homohexamers on either side of HJ DNA bound by 1 or 2 RuvA tetramers; 4 subunits per hexamer contact DNA at a time. Coordinated motions by a converter formed by DNA-disengaged RuvB subunits stimulates ATP hydrolysis and nucleotide exchange. Immobilization of the converter enables RuvB to convert the ATP-contained energy into a lever motion, pulling 2 nucleotides of DNA out of the RuvA tetramer per ATP hydrolyzed, thus driving DNA branch migration. The RuvB motors rotate together with the DNA substrate, which together with the progressing nucleotide cycle form the mechanistic basis for DNA recombination by continuous HJ branch migration. Branch migration allows RuvC to scan DNA until it finds its consensus sequence, where it cleaves and resolves cruciform DNA. The sequence is that of Holliday junction branch migration complex subunit RuvB from Shewanella woodyi (strain ATCC 51908 / MS32).